Reading from the N-terminus, the 408-residue chain is Acetate kinase (408 aa).

Asparagine 7 is a binding site for Mg(2+). Lysine 14 lines the ATP pocket. Arginine 91 serves as a coordination point for substrate. Aspartate 148 serves as the catalytic Proton donor/acceptor. ATP-binding positions include 208 to 212, 283 to 285, and 331 to 335; these read HLGNG, DFR, and GIGEN. Glutamate 384 serves as a coordination point for Mg(2+).

The protein belongs to the acetokinase family. As to quaternary structure, homodimer. The cofactor is Mg(2+). It depends on Mn(2+) as a cofactor.

The protein localises to the cytoplasm. The catalysed reaction is acetate + ATP = acetyl phosphate + ADP. It participates in metabolic intermediate biosynthesis; acetyl-CoA biosynthesis; acetyl-CoA from acetate: step 1/2. Its activity is regulated as follows. Inhibited by diethylpyrocarbonate, hydroxylamine and phenylglyoxal. Catalyzes the formation of acetyl phosphate from acetate and ATP. Can also catalyze the reverse reaction. Can also phosphorylate propionate, but has very low activity toward butyrate. The sequence is that of Acetate kinase from Methanosarcina thermophila.